A 298-amino-acid polypeptide reads, in one-letter code: Protein pxr1 (298 aa).

Positions 1–11 (MGLAAPRKRTK) are enriched in basic residues. Residues 1 to 23 (MGLAAPRKRTKISHDPNNTNWAR) form a disordered region. In terms of domain architecture, G-patch spans 25–79 (TSGFGHKILSSQGWTPGSFLGARDAAHADMFTAASAGHIRVVVKDDTLGLGARAG). The interval 145 to 274 (LPERESVQQS…RPLGRQIVRG (130 aa)) is disordered. Polar residues predominate over residues 151–164 (VQQSRAAVETSDSN). Positions 199–222 (REKKEKKDKKEKKEKKDKKDKKRK) are enriched in basic residues. Over residues 247–256 (GLESDSTSVS) the composition is skewed to polar residues.

This sequence belongs to the PINX1 family.

It localises to the nucleus. The protein resides in the nucleolus. Functionally, involved in rRNA-processing at A0, A1 and A2 sites and negatively regulates telomerase. This Aspergillus terreus (strain NIH 2624 / FGSC A1156) protein is Protein pxr1 (pxr1).